Here is a 349-residue protein sequence, read N- to C-terminus: Protein-glutamate methylesterase/protein-glutamine glutaminase (349 aa).

In terms of domain architecture, Response regulatory spans 5–122 (RVLSVDDSAL…REGMLAYSEM (118 aa)). Position 56 is a 4-aspartylphosphate (aspartate 56). The 193-residue stretch at 152-344 (LLSSEKLIAI…QQMLAKISAG (193 aa)) folds into the CheB-type methylesterase domain. Active-site residues include serine 164, histidine 190, and aspartate 286.

This sequence belongs to the CheB family. Post-translationally, phosphorylated by CheA. Phosphorylation of the N-terminal regulatory domain activates the methylesterase activity.

The protein resides in the cytoplasm. The enzyme catalyses [protein]-L-glutamate 5-O-methyl ester + H2O = L-glutamyl-[protein] + methanol + H(+). It carries out the reaction L-glutaminyl-[protein] + H2O = L-glutamyl-[protein] + NH4(+). In terms of biological role, involved in chemotaxis. Part of a chemotaxis signal transduction system that modulates chemotaxis in response to various stimuli. Catalyzes the demethylation of specific methylglutamate residues introduced into the chemoreceptors (methyl-accepting chemotaxis proteins or MCP) by CheR. Also mediates the irreversible deamidation of specific glutamine residues to glutamic acid. This chain is Protein-glutamate methylesterase/protein-glutamine glutaminase, found in Salmonella typhi.